Here is a 241-residue protein sequence, read N- to C-terminus: MATNAKPVYKRILLKLSGEALQGTEGFGIDASILDRMAQEIKELVELGIQVGVVIGGGNLFRGAGLAKAGMNRVVGDHMGMLATVMNGLAMRDALHRAYVNARLMSAIPLNGVCDNYSWAEAISLLRNNRVVILSAGTGNPFFTTDSAACLRGIEIEADVVLKATKVDGVFTADPAKDPSATMYDQLTYSEVLDKELKVMDLAAFTLARDHKLPIRVFNMNKPGALRRVVMGEKEGTLITE.

Position 15 to 18 (15 to 18 (KLSG)) interacts with ATP. Positions 23 to 28 (GTEGFG) are involved in allosteric activation by GTP. Residue Gly-57 participates in UMP binding. The ATP site is built by Gly-58 and Arg-62. Residues Asp-77 and 138-145 (TGNPFFTT) contribute to the UMP site. Residues Thr-165, Phe-171, and Asp-174 each coordinate ATP.

Belongs to the UMP kinase family. In terms of assembly, homohexamer.

It is found in the cytoplasm. The enzyme catalyses UMP + ATP = UDP + ADP. Its pathway is pyrimidine metabolism; CTP biosynthesis via de novo pathway; UDP from UMP (UMPK route): step 1/1. With respect to regulation, allosterically activated by GTP. Inhibited by UTP. Its function is as follows. Catalyzes the reversible phosphorylation of UMP to UDP. This is Uridylate kinase from Salmonella choleraesuis (strain SC-B67).